Reading from the N-terminus, the 218-residue chain is LexA repressor (218 aa).

The segment at residues 28–48 (RAEIAAEFGFSSPNSAEEHLR) is a DNA-binding region (H-T-H motif). Catalysis depends on for autocatalytic cleavage activity residues S136 and K173.

The protein belongs to the peptidase S24 family. As to quaternary structure, homodimer.

It catalyses the reaction Hydrolysis of Ala-|-Gly bond in repressor LexA.. Functionally, represses a number of genes involved in the response to DNA damage (SOS response), including recA and lexA. In the presence of single-stranded DNA, RecA interacts with LexA causing an autocatalytic cleavage which disrupts the DNA-binding part of LexA, leading to derepression of the SOS regulon and eventually DNA repair. The polypeptide is LexA repressor (Cupriavidus metallidurans (strain ATCC 43123 / DSM 2839 / NBRC 102507 / CH34) (Ralstonia metallidurans)).